Here is a 385-residue protein sequence, read N- to C-terminus: UPF0744 protein YSC83 (385 aa).

The protein belongs to the UPF0744 family.

It is found in the mitochondrion outer membrane. This is UPF0744 protein YSC83 (YSC83) from Saccharomyces cerevisiae (strain ATCC 204508 / S288c) (Baker's yeast).